We begin with the raw amino-acid sequence, 492 residues long: Probable malate:quinone oxidoreductase 1 (492 aa).

The protein belongs to the MQO family. Requires FAD as cofactor.

It carries out the reaction (S)-malate + a quinone = a quinol + oxaloacetate. It functions in the pathway carbohydrate metabolism; tricarboxylic acid cycle; oxaloacetate from (S)-malate (quinone route): step 1/1. This Staphylococcus epidermidis (strain ATCC 12228 / FDA PCI 1200) protein is Probable malate:quinone oxidoreductase 1.